A 203-amino-acid chain; its full sequence is Cupin-domain-containing oxidoreductase fogC (203 aa).

Residues D105–L171 are cupin-like domain.

This sequence belongs to the virC family.

It functions in the pathway secondary metabolite biosynthesis. Its function is as follows. Cupin-domain-containing oxidoreductase; part of the gene cluster that mediates the biosynthesis of flavoglaucin and congeners (including aspergin, dihydroauroglaucin and auroglaucin), prenylated salicylaldehyde derivatives carrying a saturated or an unsaturated C-7 side chain. The PKS fogA releases the carboxylic acid (8E,10E,12E)-3,5,7-trihydroxytetradeca-8,10,12-trienoic acid as its product, as well as derivatives with one and two double bonds. FogA is indeed able to reduce the initial triketide, thus being at least partially responsible for the differently saturated heptyl side chains of flavoglaucin congeners. The oxidoreductases fogB, fogC and fogD modify the nascent polyketide in fogA-bound form and, together, fogA, fogB, fogC and fogD are necessary for the formation of the aromatic core and the cyclized PKS products are released as salicyl alcohols. In particular, fogB is responsible for oxidation of a hydroxyl group or reduction of remaining double bond(s) at the C-7 residue whereas fogD is probably involved in the reductive release of the modified PKS products. The cytochrome P450 monooxygenase fogE is then responsible for the hydroxylation at C-3 of the benzene ring. The fogE products are substrates of the prenyltransferase fogH and the prenylated benzyl alcohols are subsequently oxidized by the fogF to produce the final aryl aldehydes flavoglaucin and congeners. The short-chain dehydrogenase fogG does not seem to be involved in the biosynthesis of the prenylated salicylaldehyde derivatives. The protein is Cupin-domain-containing oxidoreductase fogC of Aspergillus ruber (strain CBS 135680).